The sequence spans 1205 residues: Plasma membrane calcium-transporting ATPase 4 (1205 aa).

Topologically, residues 1-100 (MTNPPGQSVS…KTFLELVWEA (100 aa)) are cytoplasmic. The chain crosses the membrane as a helical span at residues 101-121 (LQDVTLIILEIAAIISLVLSF). Over 122-147 (YRPPGGDNEICGHIASSPEEEEEGET) the chain is Extracellular. The chain crosses the membrane as a helical span at residues 148 to 168 (GWIEGAAILASVIIVVLVTAF). At 169–369 (NDWSKEKQFR…LAVQIGKAGL (201 aa)) the chain is on the cytoplasmic side. The interval 294–318 (DDDDKKKKGKKQGAPENRNKAKTQD) is disordered. Residues Ser-329 and Ser-335 each carry the phosphoserine modification. Residues 370-390 (IMSVLTVVILILYFVVDNFVI) form a helical membrane-spanning segment. The Extracellular portion of the chain corresponds to 391–409 (QRREWLPECTPVYIQYFVK). A helical transmembrane segment spans residues 410-430 (FFIIGVTVLVVAVPEGLPLAV). Residues 431–844 (TISLAYSVKK…RNVYDSISKF (414 aa)) lie on the Cytoplasmic side of the membrane. The 4-aspartylphosphate intermediate role is filled by Asp-466. Positions 786 and 790 each coordinate Mg(2+). Residues 845 to 865 (LQFQLTVNVVAVIVAFTGACI) traverse the membrane as a helical segment. Topologically, residues 866-872 (TQDSPLK) are extracellular. Residues 873-893 (AVQMLWVNLIMDTFASLALAT) form a helical membrane-spanning segment. At 894-919 (EPPTESLLRRRPYGRNKPLISRTMMK) the chain is on the cytoplasmic side. A helical transmembrane segment spans residues 920-942 (NILGHAVYQLLIVFLLVFAGDTL). Topologically, residues 943-956 (FDIDSGRKAPLNSP) are extracellular. Residues 957-979 (PSQHYTIVFNTFVLMQLFNEINA) traverse the membrane as a helical segment. The Cytoplasmic segment spans residues 980–995 (RKIHGEKNVFAGVYRN). A helical transmembrane segment spans residues 996–1016 (IIFCTVVLGTFFCQIMIVELG). Over 1017-1029 (GKPFSCTSLTMEQ) the chain is Extracellular. A helical membrane pass occupies residues 1030–1050 (WMWCLFIGIGELLWGQVISAI). Residues 1051–1205 (PTKSLKFLKE…SPLPSLETPV (155 aa)) are Cytoplasmic-facing. Phosphoserine occurs at positions 1065 and 1071. At Arg-1072 the chain carries Omega-N-methylarginine. Residues 1087–1104 (LRRGQILWVRGLNRIQTQ) form a calmodulin-binding subdomain A region. At Thr-1103 the chain carries Phosphothreonine; by PKC. Residues 1105 to 1114 (IRVVKLFHNN) are calmodulin-binding subdomain B. At Ser-1145 the chain carries Phosphoserine.

The protein belongs to the cation transport ATPase (P-type) (TC 3.A.3) family. Type IIB subfamily. Interacts with PDZD11. Interacts with SLC35G1 and STIM1. Interacts with calmodulin. As to expression, specifically expressed by sperm in testis (at protein level).

The protein localises to the membrane. The protein resides in the cell projection. It localises to the cilium. Its subcellular location is the flagellum membrane. The catalysed reaction is Ca(2+)(in) + ATP + H2O = Ca(2+)(out) + ADP + phosphate + H(+). Its activity is regulated as follows. Activated by calcium/calmodulin. Its function is as follows. Calcium/calmodulin-regulated and magnesium-dependent enzyme that catalyzes the hydrolysis of ATP coupled with the transport of calcium out of the cell. By regulating sperm cell calcium homeostasis, may play a role in sperm motility. In Mus musculus (Mouse), this protein is Plasma membrane calcium-transporting ATPase 4.